Reading from the N-terminus, the 445-residue chain is Chromosomal replication initiator protein DnaA (445 aa).

Positions 1–73 (MSPNSTLWQT…NELATKYSST (73 aa)) are domain I, interacts with DnaA modulators. A domain II region spans residues 73–102 (TPVRLKFVSQEEVIEEPVADRKLTIDYRQG). Residues 103 to 323 (NLNSTYTFDS…GALIRLISYA (221 aa)) form a domain III, AAA+ region region. ATP-binding residues include glycine 147, glycine 149, lysine 150, and threonine 151. A domain IV, binds dsDNA region spans residues 324 to 445 (QTFNLEITMN…KFAVDSIVKK (122 aa)).

It belongs to the DnaA family. Oligomerizes as a right-handed, spiral filament on DNA at oriC.

The protein resides in the cytoplasm. Its function is as follows. Plays an essential role in the initiation and regulation of chromosomal replication. ATP-DnaA binds to the origin of replication (oriC) to initiate formation of the DNA replication initiation complex once per cell cycle. Binds the DnaA box (a 9 base pair repeat at the origin) and separates the double-stranded (ds)DNA. Forms a right-handed helical filament on oriC DNA; dsDNA binds to the exterior of the filament while single-stranded (ss)DNA is stabiized in the filament's interior. The ATP-DnaA-oriC complex binds and stabilizes one strand of the AT-rich DNA unwinding element (DUE), permitting loading of DNA polymerase. After initiation quickly degrades to an ADP-DnaA complex that is not apt for DNA replication. Binds acidic phospholipids. In Acholeplasma laidlawii, this protein is Chromosomal replication initiator protein DnaA.